We begin with the raw amino-acid sequence, 225 residues long: Polyadenylate-binding protein 2 (225 aa).

The segment covering 1 to 36 (MADEDISLNEDQLLESMEETNGEQETEIVTETEEEG) has biased composition (acidic residues). The disordered stretch occupies residues 1–42 (MADEDISLNEDQLLESMEETNGEQETEIVTETEEEGSMQIDP). Residues 14–74 (LESMEETNGE…QSEVDKQMAG (61 aa)) adopt a coiled-coil conformation. The RRM domain maps to 96-173 (RSVYVGNVDY…RQIKVMSKRT (78 aa)).

It localises to the nucleus. The protein localises to the cytoplasm. Functionally, involved in the 3'-end formation of mRNA precursors (pre-mRNA) by the addition of a poly(A) tail of 200-250 nt to the upstream cleavage product. Stimulates poly(A) polymerase (PAPOLA) conferring processivity on the poly(A) tail elongation reaction and also controls the poly(A) tail length. Increases the affinity of poly(A) polymerase for RNA. Binds to poly(A) and to poly(G) with high affinity. May protect the poly(A) tail from degradation. In Drosophila pseudoobscura pseudoobscura (Fruit fly), this protein is Polyadenylate-binding protein 2.